The sequence spans 104 residues: DET1- and DDB1-associated protein 1 (104 aa).

A compositionally biased stretch (basic and acidic residues) spans 67 to 77; it reads KKNAAKKREQE. The interval 67 to 104 is disordered; that stretch reads KKNAAKKREQEQAEGEGGSPAPPRKIARTDSQEMNEDS.

This sequence belongs to the DDA1 family. Component of numerous DCX (DDB1-CUL4-X-box) E3 ubiquitin-protein ligase complexes which consist of a core of DDB1, cullin-4 (CUL4A or CUL4B), DDA1 and RBX1.

It participates in protein modification; protein ubiquitination. Its function is as follows. Functions as a component of numerous distinct DCX (DDB1-CUL4-X-box) E3 ubiquitin-protein ligase complexes which mediate the ubiquitination and subsequent proteasomal degradation of target proteins. In the DCX complexes, acts as a scaffolding subunit required to stabilize the complex. This is DET1- and DDB1-associated protein 1 from Danio rerio (Zebrafish).